A 786-amino-acid polypeptide reads, in one-letter code: Neprilysin-3 (786 aa).

Over 1–52 (MTRYKQTEFTEDDSSSIGGIQLNEATGHTGMQIRYHTARATWNWRSRNKTEK) the chain is Cytoplasmic. The helical; Signal-anchor for type II membrane protein transmembrane segment at 53–73 (WLLITTFVMAITIFTLLIVLF) threads the bilayer. At 74-786 (TDGGSSDATK…MNPTEKCEVW (713 aa)) the chain is on the extracellular side. The 685-residue stretch at 102–786 (PCLNKHCIFA…MNPTEKCEVW (685 aa)) folds into the Peptidase M13 domain. 5 disulfide bridges follow: C103–C108, C126–C771, C134–C731, C190–C450, and C659–C783. N-linked (GlcNAc...) asparagine glycans are attached at residues N216, N226, N256, N279, N305, N325, N356, N388, N496, and N569. H622 contributes to the Zn(2+) binding site. The active site involves E623. The Zn(2+) site is built by H626 and E682. The active-site Proton donor is the D686. N-linked (GlcNAc...) asparagine glycosylation occurs at N715.

The protein belongs to the peptidase M13 family. Zn(2+) serves as cofactor.

It is found in the cell membrane. It catalyses the reaction Preferential cleavage of polypeptides between hydrophobic residues, particularly with Phe or Tyr at P1'.. Its function is as follows. Metalloendoprotease which is required in the dorsal paired medial neurons for the proper formation of long-term (LTM) and middle-term memories (MTM). Also required in the mushroom body neurons where it functions redundantly with neprilysins Nep2 and Nep4 in normal LTM formation. In Drosophila melanogaster (Fruit fly), this protein is Neprilysin-3.